The following is a 218-amino-acid chain: Mediator of RNA polymerase II transcription subunit 20 (218 aa).

It belongs to the Mediator complex subunit 20 family. In terms of assembly, component of the Mediator complex.

The protein resides in the nucleus. In terms of biological role, component of the Mediator complex, a coactivator involved in the regulated transcription of nearly all RNA polymerase II-dependent genes. Mediator functions as a bridge to convey information from gene-specific regulatory proteins to the basal RNA polymerase II transcription machinery. Mediator is recruited to promoters by direct interactions with regulatory proteins and serves as a scaffold for the assembly of a functional preinitiation complex with RNA polymerase II and the general transcription factors. This chain is Mediator of RNA polymerase II transcription subunit 20 (SRB2), found in Yarrowia lipolytica (strain CLIB 122 / E 150) (Yeast).